Here is a 776-residue protein sequence, read N- to C-terminus: Semaphorin-4F (776 aa).

A signal peptide spans 1–39 (MLARAERPRPGPRPPPVFPFPPPLSLLLLLAILSAPVCG). Residues 40 to 665 (RVPRSVPRTS…GPSNRAHTVV (626 aa)) are Extracellular-facing. Residues 47 to 515 (RTSLPISEAD…SHTEVTQVNT (469 aa)) form the Sema domain. Asparagine 69 carries an N-linked (GlcNAc...) asparagine glycan. A disulfide bridge links cysteine 117 with cysteine 127. Asparagine 138 is a glycosylation site (N-linked (GlcNAc...) asparagine). 3 cysteine pairs are disulfide-bonded: cysteine 145–cysteine 154, cysteine 278–cysteine 389, and cysteine 302–cysteine 348. N-linked (GlcNAc...) asparagine glycosylation is present at asparagine 514. The 52-residue stretch at 517–568 (NCGRLQSCSECILAQDPVCAWSFRLDACVAHAGEHRGMVQDIESADVSSLCP) folds into the PSI domain. Cystine bridges form between cysteine 518/cysteine 535, cysteine 527/cysteine 544, and cysteine 592/cysteine 633. The region spanning 585–640 (VGHVVLPCSPSSAWASCVWHQPSGVTALTPRRDGLEVVVTPGAMGAYACECQEGGA) is the Ig-like C2-type domain. A helical membrane pass occupies residues 666–686 (GAGLVGFLLGVLAASLTLLLI). Over 687 to 776 (GRRQQRRRQR…PLATCDETSI (90 aa)) the chain is Cytoplasmic. The disordered stretch occupies residues 702–741 (DKVGLDLGAPPSGTTSYSQDPPSPSPEDERLPLALGKRGS). Phosphoserine is present on residues serine 724 and serine 726. Residues 774 to 776 (TSI) carry the PDZ-binding motif.

It belongs to the semaphorin family. In terms of assembly, interacts (via PDZ-binding motif) with DLG4/SAP90 (via PDZ domain 2); this interaction may promote translocation of DLG4/SAP90 to the membrane. As to expression, expressed at low levels in the developing embryo. Expressed at high levels in the lung and adult central nervous system, including the dorsal root ganglia.

Its subcellular location is the cell membrane. The protein resides in the postsynaptic density. It is found in the perikaryon. The protein localises to the cell projection. It localises to the dendrite. Probable cell surface receptor that regulates oligodendroglial precursor cell migration. Might also regulate differentiation of oligodendroglial precursor cells. Has growth cone collapse activity against retinal ganglion-cell axons. This chain is Semaphorin-4F (Sema4f), found in Rattus norvegicus (Rat).